Reading from the N-terminus, the 344-residue chain is Endo-1,4-beta-xylanase UM03411 (344 aa).

An N-terminal signal peptide occupies residues 1-21; the sequence is MKTNFLVLLSALLAASSAVTA. Positions 35 to 338 constitute a GH10 domain; that stretch reads QRAGSSLNAA…KPAYNAVLST (304 aa). Glu-166 (proton donor) is an active-site residue. Asn-171 is a glycosylation site (N-linked (GlcNAc...) asparagine). Catalysis depends on Glu-275, which acts as the Nucleophile. Cys-293 and Cys-299 are joined by a disulfide. N-linked (GlcNAc...) asparagine glycans are attached at residues Asn-310 and Asn-323.

The protein belongs to the glycosyl hydrolase 10 (cellulase F) family.

The protein resides in the secreted. It carries out the reaction Endohydrolysis of (1-&gt;4)-beta-D-xylosidic linkages in xylans.. It participates in glycan degradation; xylan degradation. Functionally, endo-1,4-beta-xylanase involved in the hydrolysis of xylan, a major structural heterogeneous polysaccharide found in plant biomass representing the second most abundant polysaccharide in the biosphere, after cellulose. The polypeptide is Endo-1,4-beta-xylanase UM03411 (Mycosarcoma maydis (Corn smut fungus)).